Reading from the N-terminus, the 166-residue chain is Small ribosomal subunit protein uS5 (166 aa).

The 64-residue stretch at 11–74 (LQEKLIAVNR…EKARRNMINV (64 aa)) folds into the S5 DRBM domain.

This sequence belongs to the universal ribosomal protein uS5 family. As to quaternary structure, part of the 30S ribosomal subunit. Contacts proteins S4 and S8.

Functionally, with S4 and S12 plays an important role in translational accuracy. Located at the back of the 30S subunit body where it stabilizes the conformation of the head with respect to the body. The protein is Small ribosomal subunit protein uS5 of Cronobacter sakazakii (strain ATCC BAA-894) (Enterobacter sakazakii).